The sequence spans 913 residues: Protein SEY1 homolog (913 aa).

Residues 1–825 (MTDVNKTQII…ETGGHMSLKN (825 aa)) lie on the Cytoplasmic side of the membrane. The 256-residue stretch at 33-288 (GFNYNVIAIL…IPADGFAQYC (256 aa)) folds into the GB1/RHD3-type G domain. 43–50 (GSQSSGKS) serves as a coordination point for GTP. The helical transmembrane segment at 826–846 (VPFAFWVILLILGWNEILMFT) threads the bilayer. The Lumenal segment spans residues 847 to 849 (RLF). A helical transmembrane segment spans residues 850–870 (FRLNIILPMLIGFIIIVISCL). The Cytoplasmic portion of the chain corresponds to 871-913 (YTGNAQILSYINKIIFIVIKNLYNFYKHLQTIGHQTTKPEKVE).

It belongs to the TRAFAC class dynamin-like GTPase superfamily. GB1/RHD3 GTPase family. RHD3 subfamily.

The protein resides in the endoplasmic reticulum membrane. In terms of biological role, probable GTP-binding protein involved in generating and maintaining the structure of the tubular endoplasmic reticulum network. In Plasmodium berghei (strain Anka), this protein is Protein SEY1 homolog.